Here is a 706-residue protein sequence, read N- to C-terminus: Gamma-adducin (706 aa).

The segment covering 1-10 (MSSDASQGVI) has biased composition (polar residues). The tract at residues 1–20 (MSSDASQGVITTPPPPSMPH) is disordered. At S2 the chain carries N-acetylserine. A phosphoserine mark is found at S42, S64, S402, S414, S423, S442, and S461. Disordered regions lie at residues 471–497 (AEDS…LNTN), 535–555 (PSTM…NPFS), 575–610 (GLED…KLEE), and 666–706 (EKIE…KVEA). K484 participates in a covalent cross-link: Glycyl lysine isopeptide (Lys-Gly) (interchain with G-Cter in SUMO2). 7 positions are modified to phosphoserine: S585, S590, S673, S677, S679, S681, and S683. Positions 589–602 (SSVSQIQSQTQSPQ) are enriched in low complexity. Residues 682 to 706 (PSKKKKKFRTPSFLKKNKKKEKVEA) show a composition bias toward basic residues. Residues 684-701 (KKKKKFRTPSFLKKNKKK) are interaction with calmodulin.

Belongs to the aldolase class II family. Adducin subfamily. In terms of assembly, heterodimer of an alpha and a gamma subunit. Post-translationally, sumoylated. Proteolytically cleaved by asparagine endopeptidase (AEP) into 2 fragments. Overexpression of the 1-357 fragment induces neuronal apoptosis, and overexpression of either 1-357 or 358-706 fragment increases the degeneration of dendritic spines. Overexpression of the 1-357 fragment impairs neurite outgrowth by downregulating the expression of Rac2, and induces synaptic dysfunction and cognitive impairments in tau P301S transgenic mice, a mouse model for Alzheimer disease (AD). As to expression, ubiquitously expressed. Cleavage fragment 1-357 is abundantly expressed in the brain of patients with Alzheimer disease (AD), but hardly detectable in age-matched control individuals (at protein level).

It localises to the cytoplasm. The protein resides in the cytoskeleton. It is found in the cell membrane. Its function is as follows. Membrane-cytoskeleton-associated protein that promotes the assembly of the spectrin-actin network. Plays a role in actin filament capping. Binds to calmodulin. Involved in myogenic reactivity of the renal afferent arteriole (Af-art), renal interlobular arteries and middle cerebral artery (MCA) to increased perfusion pressure. Involved in regulation of potassium channels in the vascular smooth muscle cells (VSMCs) of the Af-art and MCA ex vivo. Involved in regulation of glomerular capillary pressure, glomerular filtration rate (GFR) and glomerular nephrin expression in response to hypertension. Involved in renal blood flow (RBF) autoregulation. Plays a role in podocyte structure and function. Regulates globular monomer actin (G-actin) and filamentous polymer actin (F-actin) ratios in the primary podocytes affecting actin cytoskeleton organization. Regulates expression of synaptopodin, RhoA, Rac1 and CDC42 in the renal cortex and the primary podocytes. Regulates expression of nephrin in the glomeruli and in the primary podocytes, expression of nephrin and podocinin in the renal cortex, and expression of focal adhesion proteins integrin alpha-3 and integrin beta-1 in the glomeruli. Involved in cell migration and cell adhesion of podocytes, and in podocyte foot process effacement. Regulates expression of profibrotics markers MMP2, MMP9, TGF beta-1, tubular tight junction protein E-cadherin, and mesenchymal markers vimentin and alpha-SMA. Promotes the growth of neurites. This chain is Gamma-adducin (ADD3), found in Homo sapiens (Human).